Reading from the N-terminus, the 361-residue chain is GTP 3',8-cyclase (361 aa).

Residues 1-30 (MTVTALGLPTVARSTGDGSAGASPAPADGP) are disordered. Over residues 16–30 (GDGSAGASPAPADGP) the composition is skewed to low complexity. The Radical SAM core domain occupies 34–252 (TYGRAATDLR…LQQHFELTPD (219 aa)). Residue Arg-43 coordinates GTP. The [4Fe-4S] cluster site is built by Cys-50 and Cys-54. Tyr-56 contacts S-adenosyl-L-methionine. Cys-57 contacts [4Fe-4S] cluster. Position 94 (Arg-94) interacts with GTP. Gly-98 is an S-adenosyl-L-methionine binding site. GTP is bound at residue Thr-125. Ser-149 provides a ligand contact to S-adenosyl-L-methionine. Position 186 (Lys-186) interacts with GTP. Met-220 provides a ligand contact to S-adenosyl-L-methionine. [4Fe-4S] cluster-binding residues include Cys-288 and Cys-291. 293-295 (RTR) contributes to the GTP binding site. Cys-305 contributes to the [4Fe-4S] cluster binding site.

Belongs to the radical SAM superfamily. MoaA family. Monomer and homodimer. It depends on [4Fe-4S] cluster as a cofactor.

It carries out the reaction GTP + AH2 + S-adenosyl-L-methionine = (8S)-3',8-cyclo-7,8-dihydroguanosine 5'-triphosphate + 5'-deoxyadenosine + L-methionine + A + H(+). It functions in the pathway cofactor biosynthesis; molybdopterin biosynthesis. Functionally, catalyzes the cyclization of GTP to (8S)-3',8-cyclo-7,8-dihydroguanosine 5'-triphosphate. The chain is GTP 3',8-cyclase from Mycolicibacterium smegmatis (strain ATCC 700084 / mc(2)155) (Mycobacterium smegmatis).